A 209-amino-acid polypeptide reads, in one-letter code: MTEYKIVIVGGGLVGKSALTLQLVQVCIKDQYYLIEFQNNQFQFENLQNHYIDEYDPTVEDSRREVSIDDQTCLLNILDTAGQQHSNAQSMDAHWSTVFVCLFNYFNITSMYDEIASFREQILRVKDGAKDLVPLILIINKADLDHESQGSGNEGQLAKDSLSFHQSSAKSRINLEEIPYSLVRELRKELKLDQSSGKAQKKKKQCLII.

Residue 10-17 participates in GTP binding; the sequence is GGGLVGKS. The Effector region motif lies at 55–63; sequence YDPTVEDSR. Residue threonine 58 is modified to Phosphothreonine. GTP is bound by residues 79-83 and 140-143; these read DTAGQ and NKAD. Residue cysteine 206 is modified to Cysteine methyl ester. Residue cysteine 206 is the site of S-geranylgeranyl cysteine attachment. A propeptide spans 207–209 (removed in mature form); sequence LII.

This sequence belongs to the small GTPase superfamily. Ras family. Post-translationally, phosphorylated in the presence of insulin.

The protein localises to the cell membrane. It carries out the reaction GTP + H2O = GDP + phosphate + H(+). Its activity is regulated as follows. Alternates between an inactive form bound to GDP and an active form bound to GTP. Activated by a guanine nucleotide-exchange factor (GEF) and inactivated by a GTPase-activating protein (GAP). Functionally, this protein is activated by the insulin/insulin (insulin-like)-receptor system. This transition enables the ras protein to interact with the lectin-receptor/lectin complex, a process which ultimately lead to an initiation of an intra-cellular signal-transduction chain. In Geodia cydonium (Sponge), this protein is Ras-like protein.